A 512-amino-acid chain; its full sequence is Retinaldehyde dehydrogenase 3 (512 aa).

Positions 1-23 are disordered; the sequence is MATANGAVENGQPDGKPPALPRP. The residue at position 2 (Ala2) is an N-acetylalanine. NAD(+)-binding positions include Lys204, Glu207, and 257-262; that span reads GSTEVG. The active-site Proton acceptor is the Glu280. Catalysis depends on Cys314, which acts as the Nucleophile. The NAD(+) site is built by Gln361 and Glu411.

It belongs to the aldehyde dehydrogenase family. Homotetramer.

The protein resides in the cytoplasm. It catalyses the reaction all-trans-retinal + NAD(+) + H2O = all-trans-retinoate + NADH + 2 H(+). The enzyme catalyses retinal + NAD(+) + H2O = retinoate + NADH + 2 H(+). It carries out the reaction all-trans-13,14-dihydroretinal + NAD(+) + H2O = all-trans-13,14-dihydroretinoate + NADH + 2 H(+). It functions in the pathway cofactor metabolism; retinol metabolism. Catalyzes the NAD-dependent oxidation of aldehyde substrates, such as all-trans-retinal and all-trans-13,14-dihydroretinal, to their corresponding carboxylic acids, all-trans-retinoate and all-trans-13,14-dihydroretinoate, respectively. High specificity for all-trans-retinal as substrate, can also accept acetaldehyde as substrate in vitro but with lower affinity. Required for the biosynthesis of normal levels of retinoate in the embryonic ocular and nasal regions; a critical lipid in the embryonic development of the eye and the nasal region. This chain is Retinaldehyde dehydrogenase 3 (Aldh1a3), found in Rattus norvegicus (Rat).